The primary structure comprises 295 residues: MQIIDGKKISQDLKNELKTDVAHFQASIGKVPGLTVIIVGHDPASQVYVRNKAKSCLEIGMHSTVIEMPHDTPQETLLQAIRELNQDPAVHGILVQQPLPKQIDEFAVTLAIDPSKDVDGFHPENLGRLVMGHLDKCFVSCTPYGILELLDRYNIETKGKHCVVVGRSNIVGKPMANLMMQKLDATNCTVTVCHSATRDIPSFTKQADILIAALGKARFITADMVKPGAVVIDVGINRIEDPSTKSGYRLVGDVDYDGVAALASAITPVPGGVGPMTIAMLLKNTLQSFRRINNL.

Residues 166 to 168, Ser-195, and Ile-236 each bind NADP(+); that span reads GRS.

Belongs to the tetrahydrofolate dehydrogenase/cyclohydrolase family. As to quaternary structure, homodimer.

It catalyses the reaction (6R)-5,10-methylene-5,6,7,8-tetrahydrofolate + NADP(+) = (6R)-5,10-methenyltetrahydrofolate + NADPH. The enzyme catalyses (6R)-5,10-methenyltetrahydrofolate + H2O = (6R)-10-formyltetrahydrofolate + H(+). Its pathway is one-carbon metabolism; tetrahydrofolate interconversion. In terms of biological role, catalyzes the oxidation of 5,10-methylenetetrahydrofolate to 5,10-methenyltetrahydrofolate and then the hydrolysis of 5,10-methenyltetrahydrofolate to 10-formyltetrahydrofolate. The sequence is that of Bifunctional protein FolD from Chlorobium phaeobacteroides (strain DSM 266 / SMG 266 / 2430).